The chain runs to 244 residues: Probable fimbrial assembly protein FimC, serogroup H1 (244 aa).

The chain is Probable fimbrial assembly protein FimC, serogroup H1 (fimC) from Dichelobacter nodosus (Bacteroides nodosus).